Here is a 237-residue protein sequence, read N- to C-terminus: Cyclic nucleotide phosphodiesterase inhibitor (237 aa).

An N-terminal signal peptide occupies residues 1 to 20 (MAKIIISLILLLSLFSFSYG). N-linked (GlcNAc...) asparagine glycans are attached at residues Asn-28, Asn-65, and Asn-70. Cys-rich CT repeat units follow at residues 57–81 (DLCH…CNDN), 82–105 (NPCT…CDPG), 116–139 (DPCT…CNDG), 140–162 (DACT…CDDN), and 163–186 (DPCT…CSIK). Asn-153 is a glycosylation site (N-linked (GlcNAc...) asparagine). The N-linked (GlcNAc...) asparagine glycan is linked to Asn-207.

PDI acts by binding stoichiometrically to cyclic nucleotide phosphodiesterase, changing the KM of the enzyme for cAMP from 10 uM to 2 mM. This chain is Cyclic nucleotide phosphodiesterase inhibitor (pdiA), found in Dictyostelium discoideum (Social amoeba).